Here is a 283-residue protein sequence, read N- to C-terminus: MSRTPRVARSLSALRRELDSLRARKATVALVPTMGALHDGHISLVRQAKRRADKVVVSIFVNPTQFAPTEDFGSYPRTWKEDVAKLAAERVDLIWHPDAKAMYPDGFTTRIVPEGPALAGLEDRFRPHFFGGVATVVAKLFAQCRPDVAIFGEKDYQQLRVVTQMARDLDLGVRVVGSRTVRERDGLAMSSRNVYLSADERRVAPTLHRALKELASRLRAGGDMQDALRDGNATITQAGFDLDYLEVRHAETLAPVTQDESGPKRILVAARIGTTRLIDNIAV.

An ATP-binding site is contributed by 34-41 (MGALHDGH). The active-site Proton donor is His-41. Residue Gln-65 participates in (R)-pantoate binding. Gln-65 lines the beta-alanine pocket. 152–155 (GEKD) is an ATP binding site. Gln-158 lines the (R)-pantoate pocket. ATP-binding positions include Val-181 and 189 to 192 (MSSR).

Belongs to the pantothenate synthetase family. In terms of assembly, homodimer.

The protein resides in the cytoplasm. It catalyses the reaction (R)-pantoate + beta-alanine + ATP = (R)-pantothenate + AMP + diphosphate + H(+). Its pathway is cofactor biosynthesis; (R)-pantothenate biosynthesis; (R)-pantothenate from (R)-pantoate and beta-alanine: step 1/1. Its function is as follows. Catalyzes the condensation of pantoate with beta-alanine in an ATP-dependent reaction via a pantoyl-adenylate intermediate. In Bradyrhizobium sp. (strain BTAi1 / ATCC BAA-1182), this protein is Pantothenate synthetase.